A 166-amino-acid chain; its full sequence is Anterior gradient protein 3 (166 aa).

An N-terminal signal peptide occupies residues 1–21; that stretch reads MMLHSALGLCLLLVTVSSNLA. A Prevents secretion from ER motif is present at residues 163–166; the sequence is QSEL.

Belongs to the AGR family. As to quaternary structure, interacts with LYPD3 and DAG1 (alphaDAG1). As to expression, expressed in the lung, in the ciliated cells of the airway epithelium. Expression increased with differentiation of airway epithelial cells. Not detected in the mucous cells. Expressed in ciliated cells in the oviduct. Also detected in stomach, colon, prostate and liver. Expressed in breast, ovary, prostate and liver cancer. Expression is associated with the level of differentiation of breast cancer (at protein level).

Its subcellular location is the endoplasmic reticulum. Required for calcium-mediated regulation of ciliary beat frequency and mucociliary clearance in the airway. Might be involved in the regulation of intracellular calcium in tracheal epithelial cells. In Homo sapiens (Human), this protein is Anterior gradient protein 3 (AGR3).